The following is a 1073-amino-acid chain: Probable inorganic carbon transporter subunit DabA 2 (1073 aa).

Polar residues predominate over residues 1–20 (MSSGNTSSQNHSPVNNQPTR). A disordered region spans residues 1 to 35 (MSSGNTSSQNHSPVNNQPTRLKSPLPALHKDTQPN). Cys-535, Asp-537, His-721, and Cys-736 together coordinate Zn(2+).

It belongs to the inorganic carbon transporter (TC 9.A.2) DabA family. As to quaternary structure, forms a complex with DabB. It depends on Zn(2+) as a cofactor.

The protein resides in the cell inner membrane. In terms of biological role, part of an energy-coupled inorganic carbon pump. The chain is Probable inorganic carbon transporter subunit DabA 2 from Rhodopirellula baltica (strain DSM 10527 / NCIMB 13988 / SH1).